We begin with the raw amino-acid sequence, 177 residues long: Myosin regulatory light chain 2 (177 aa).

A compositionally biased stretch (basic residues) spans M1 to K16. The interval M1 to F24 is disordered. IgE-binding epitope stretches follow at residues R13–R30, N22–G48, V49–A66, T58–M90, P79–S99, and N118–D141. In terms of domain architecture, EF-hand 1 spans R30 to I65. Ca(2+)-binding residues include D43, D45, D47, and D54. In terms of domain architecture, EF-hand 2 spans F135–D170.

In terms of assembly, myosin is a hexamer of 2 heavy chains and 4 light chains. In terms of tissue distribution, expressed in tail muscle (at protein level).

This chain is Myosin regulatory light chain 2, found in Penaeus vannamei (Whiteleg shrimp).